Consider the following 453-residue polypeptide: tRNA modification GTPase MnmE (453 aa).

Residues R22, E79, and K119 each coordinate (6S)-5-formyl-5,6,7,8-tetrahydrofolate. In terms of domain architecture, TrmE-type G spans 215-376 (GMKVVIAGRP…LKQHLKSLMG (162 aa)). N225 is a K(+) binding site. Residues 225–230 (NAGKSS), 244–250 (TEIAGTT), 269–272 (DTAG), and 334–337 (NKAD) each bind GTP. S229 contacts Mg(2+). The K(+) site is built by T244, I246, and T249. Residue T250 participates in Mg(2+) binding. (6S)-5-formyl-5,6,7,8-tetrahydrofolate is bound at residue K453.

The protein belongs to the TRAFAC class TrmE-Era-EngA-EngB-Septin-like GTPase superfamily. TrmE GTPase family. Homodimer. Heterotetramer of two MnmE and two MnmG subunits. Requires K(+) as cofactor.

It localises to the cytoplasm. In terms of biological role, exhibits a very high intrinsic GTPase hydrolysis rate. Involved in the addition of a carboxymethylaminomethyl (cmnm) group at the wobble position (U34) of certain tRNAs, forming tRNA-cmnm(5)s(2)U34. The protein is tRNA modification GTPase MnmE of Shewanella denitrificans (strain OS217 / ATCC BAA-1090 / DSM 15013).